Here is a 188-residue protein sequence, read N- to C-terminus: Thymidine kinase (188 aa).

Position 17–24 (17–24 (GPMFAGKT)) interacts with ATP. Residue E92 is the Proton acceptor of the active site. F121 contacts substrate. Zn(2+) is bound by residues C146 and C149. 166-170 (LILAG) provides a ligand contact to substrate. Residues C179 and C182 each contribute to the Zn(2+) site.

The protein belongs to the thymidine kinase family.

The catalysed reaction is thymidine + ATP = dTMP + ADP + H(+). Functionally, phosphorylates thymidine. ASFV replicates in the cytoplasm of infected cells and contains genes encoding a number of enzymes needed for DNA synthesis, including thymidine kinase. Important for growth in swine macrophages in vitro and is a virus virulence factor in swine. The protein is Thymidine kinase of African swine fever virus (isolate Tick/South Africa/Pretoriuskop Pr4/1996) (ASFV).